Here is a 389-residue protein sequence, read N- to C-terminus: Probable nitrate transporter NarT (389 aa).

A run of 12 helical transmembrane segments spans residues 14–34 (TLSL…MPFI), 45–65 (ISII…PFGY), 69–89 (IVGA…PIFF), 97–117 (GMLM…SVGV), 139–159 (GNIG…IIGW), 161–181 (TTVR…FIFG), 211–231 (WYFI…NYLV), 246–266 (GVFI…GDKF), 268–288 (AVKV…ILGI), 294–314 (LFTV…GLIF), 331–351 (IVSM…TYVA), and 353–373 (LTGS…IALF).

Belongs to the major facilitator superfamily. Nitrate/nitrite porter (TC 2.A.1.8) family.

The protein localises to the cell membrane. In terms of biological role, probably required for nitrate uptake under anoxic conditions. Also possibly involved in excretion of nitrite produced by the dissimilatory reduction of nitrate. This is Probable nitrate transporter NarT (narT) from Staphylococcus aureus (strain USA300).